The chain runs to 132 residues: Agouti-signaling protein (132 aa).

A signal peptide spans 1–22 (MDVTRLLLATLLVFLCFFTVYS). The N-linked (GlcNAc...) asparagine glycan is linked to Asn-39. The segment at 62–93 (ISRKEAEKKRSSKKEASMKKVAQPRTPLSAPC) is disordered. Basic and acidic residues predominate over residues 63–79 (SRKEAEKKRSSKKEASM). 5 disulfides stabilise this stretch: Cys-93/Cys-108, Cys-100/Cys-114, Cys-107/Cys-125, Cys-111/Cys-132, and Cys-116/Cys-123. Positions 93-132 (CVATRDSCKPPAPACCDPCASCQCRFFRSACSCRVLSLNC) constitute an Agouti domain.

Its subcellular location is the secreted. Involved in the regulation of melanogenesis. The binding of ASP to MC1R precludes alpha-MSH initiated signaling and thus blocks production of cAMP, leading to a down-regulation of eumelanogenesis (brown/black pigment) and thus increasing synthesis of pheomelanin (yellow/red pigment). The chain is Agouti-signaling protein (ASIP) from Trachypithecus auratus (Javan langur).